The chain runs to 426 residues: MLDPKLVRTQPQEVAARLATRGFQLDVARIEALEEQRKSVQTRTEQLQAERNARSKAIGQAKQRGEDIAPLLADVDRMGSELEEGKRQLDAIQGELDAMLLGIPNLPHESVPVGADEDANVEVRRWGTPKTFDFEVKDHVALGERHGWLDFETAAKLSGARFALMRGPIARLHRALAQFMINLHTAEHGYEEAYTPYLVQAPALQGTGQLPKFEEDLFKIGRDGEADLYLIPTAEVSLTNIVSGQILDAKQLPLKFVAHTPCFRSEAGASGRDTRGMIRQHQFDKVEMVQIVDPATSYEALEGLTANAERVLQLLELPYRVLALCTGDMGFGATKTYDLEVWVPSQDKYREISSCSNCGDFQARRMQARYRNPETGKPELVHTLNGSGLAVGRTLVAVLENYQQADGSIRVPEVLKPYMAGIEVIG.

233–235 (TAE) lines the L-serine pocket. 264 to 266 (RSE) contributes to the ATP binding site. Glu287 is a binding site for L-serine. 351 to 354 (EISS) contributes to the ATP binding site. Ser387 provides a ligand contact to L-serine.

It belongs to the class-II aminoacyl-tRNA synthetase family. Type-1 seryl-tRNA synthetase subfamily. As to quaternary structure, homodimer. The tRNA molecule binds across the dimer.

The protein localises to the cytoplasm. The enzyme catalyses tRNA(Ser) + L-serine + ATP = L-seryl-tRNA(Ser) + AMP + diphosphate + H(+). It carries out the reaction tRNA(Sec) + L-serine + ATP = L-seryl-tRNA(Sec) + AMP + diphosphate + H(+). The protein operates within aminoacyl-tRNA biosynthesis; selenocysteinyl-tRNA(Sec) biosynthesis; L-seryl-tRNA(Sec) from L-serine and tRNA(Sec): step 1/1. Catalyzes the attachment of serine to tRNA(Ser). Is also able to aminoacylate tRNA(Sec) with serine, to form the misacylated tRNA L-seryl-tRNA(Sec), which will be further converted into selenocysteinyl-tRNA(Sec). The chain is Serine--tRNA ligase from Pseudomonas aeruginosa (strain LESB58).